Consider the following 288-residue polypeptide: 2-methoxy-6-polyprenyl-1,4-benzoquinol methylase, mitochondrial (288 aa).

Residues 1–27 constitute a mitochondrion transit peptide; it reads MALRSVSRRLGSRILNQRSFVASLHSH. S-adenosyl-L-methionine-binding positions include Thr-94, Asp-130, and 160–161; that span reads DA.

This sequence belongs to the class I-like SAM-binding methyltransferase superfamily. MenG/UbiE family. In terms of assembly, component of a multi-subunit COQ enzyme complex.

Its subcellular location is the mitochondrion inner membrane. It carries out the reaction a 2-methoxy-6-(all-trans-polyprenyl)benzene-1,4-diol + S-adenosyl-L-methionine = a 5-methoxy-2-methyl-3-(all-trans-polyprenyl)benzene-1,4-diol + S-adenosyl-L-homocysteine + H(+). It functions in the pathway cofactor biosynthesis; ubiquinone biosynthesis. Methyltransferase required for the conversion of 2-polyprenyl-6-methoxy-1,4-benzoquinol (DDMQH2) to 2-polyprenyl-3-methyl-6-methoxy-1,4-benzoquinol (DMQH2). This is 2-methoxy-6-polyprenyl-1,4-benzoquinol methylase, mitochondrial from Arabidopsis thaliana (Mouse-ear cress).